The primary structure comprises 916 residues: Translation initiation factor IF-2 (916 aa).

The segment at 55 to 324 (EPKAVTPTSK…NHNANLKPVT (270 aa)) is disordered. The segment covering 77-88 (AAEPKAAATKPA) has biased composition (low complexity). Basic and acidic residues-rich tracts occupy residues 98–121 (FKAE…ERRN), 129–161 (RQKD…DNRN), and 198–212 (RQSE…EAKR). The span at 227–250 (KEQPTVEAAATAAPQAQPQTVEQV) shows a compositional bias: low complexity. Residues 264-281 (ARPDKSRDFSHENEDGPK) are compositionally biased toward basic and acidic residues. Over residues 291–304 (KQNQVRNQKNSNWN) the composition is skewed to low complexity. Basic residues predominate over residues 305–314 (KKNKKSKNNR). In terms of domain architecture, tr-type G spans 418 to 585 (ERAPVVTIMG…TVLLVAEIQE (168 aa)). A G1 region spans residues 427-434 (GHVDHGKT). Residue 427–434 (GHVDHGKT) coordinates GTP. Positions 452–456 (GITQH) are G2. A G3 region spans residues 473–476 (DTPG). GTP-binding positions include 473–477 (DTPGH) and 527–530 (NKID). Residues 527–530 (NKID) are G4. A G5 region spans residues 563-565 (SAK).

The protein belongs to the TRAFAC class translation factor GTPase superfamily. Classic translation factor GTPase family. IF-2 subfamily.

The protein resides in the cytoplasm. Its function is as follows. One of the essential components for the initiation of protein synthesis. Protects formylmethionyl-tRNA from spontaneous hydrolysis and promotes its binding to the 30S ribosomal subunits. Also involved in the hydrolysis of GTP during the formation of the 70S ribosomal complex. The polypeptide is Translation initiation factor IF-2 (Streptococcus mutans serotype c (strain ATCC 700610 / UA159)).